A 218-amino-acid chain; its full sequence is Ras-related protein RabO (218 aa).

GTP is bound at residue 15–22 (GDYCVGKT). The Effector region signature appears at 37 to 45 (RNCNIGVDF). GTP-binding positions include 63–67 (DTGGQ) and 122–125 (NKID). Residue C215 is modified to Cysteine methyl ester. C215 carries the S-geranylgeranyl cysteine lipid modification. The propeptide at 216 to 218 (FIL) is removed in mature form.

Belongs to the small GTPase superfamily. Rab family.

It is found in the cell membrane. This Dictyostelium discoideum (Social amoeba) protein is Ras-related protein RabO (rabO).